Reading from the N-terminus, the 288-residue chain is MKKIAIFAKVHDPRALAVAEELIEWLAARGVTAHVEEHLSKRLRRTTLAESSESTEIAADADLVVVLGGDGTLIAAARLVGERDVPILAVNLGSLGFLTEITLNELYPSVERCLAGDFEVSERMMLMASVERSGEVVELHRVLNDVVINKGALARIIDMETSVNGRYLTTFKADGLIVSTPTGSTGYSLSANGPILHPELECISLTPICPHTLTNRPLVMAADAHIAIKLKYAPDESVFLTLDGQVGMKLLSGDVVQITKAAHVTRLIQSRSKDYFEVLRTKLKWGER.

Asp-70 functions as the Proton acceptor in the catalytic mechanism. NAD(+) is bound by residues 70–71, 144–145, Arg-155, Lys-172, Asp-174, 185–190, and Gln-245; these read DG, ND, and TGYSLS.

This sequence belongs to the NAD kinase family. It depends on a divalent metal cation as a cofactor.

It is found in the cytoplasm. The enzyme catalyses NAD(+) + ATP = ADP + NADP(+) + H(+). Functionally, involved in the regulation of the intracellular balance of NAD and NADP, and is a key enzyme in the biosynthesis of NADP. Catalyzes specifically the phosphorylation on 2'-hydroxyl of the adenosine moiety of NAD to yield NADP. This is NAD kinase from Citrifermentans bemidjiense (strain ATCC BAA-1014 / DSM 16622 / JCM 12645 / Bem) (Geobacter bemidjiensis).